A 216-amino-acid chain; its full sequence is 3-isopropylmalate dehydratase small subunit (216 aa).

The protein belongs to the LeuD family. LeuD type 1 subfamily. As to quaternary structure, heterodimer of LeuC and LeuD.

It catalyses the reaction (2R,3S)-3-isopropylmalate = (2S)-2-isopropylmalate. Its pathway is amino-acid biosynthesis; L-leucine biosynthesis; L-leucine from 3-methyl-2-oxobutanoate: step 2/4. Catalyzes the isomerization between 2-isopropylmalate and 3-isopropylmalate, via the formation of 2-isopropylmaleate. In Acinetobacter baylyi (strain ATCC 33305 / BD413 / ADP1), this protein is 3-isopropylmalate dehydratase small subunit.